A 421-amino-acid polypeptide reads, in one-letter code: Histidine--tRNA ligase (421 aa).

This sequence belongs to the class-II aminoacyl-tRNA synthetase family. Homodimer.

It is found in the cytoplasm. It catalyses the reaction tRNA(His) + L-histidine + ATP = L-histidyl-tRNA(His) + AMP + diphosphate + H(+). This chain is Histidine--tRNA ligase, found in Alkaliphilus oremlandii (strain OhILAs) (Clostridium oremlandii (strain OhILAs)).